Here is a 284-residue protein sequence, read N- to C-terminus: Signal peptidase I (284 aa).

A helical membrane pass occupies residues 4–22 (NFPLLLVIAVAVCGLLALL). Over 23-58 (DLVFFAPRRRSAIASYQGSVSQPDAVVIEKLNKEPL) the chain is Cytoplasmic. A helical membrane pass occupies residues 59–77 (LVEYGKSFFPVLFIVLVLR). Residues 78–284 (SFLVEPFQIP…PNFSRVGLIK (207 aa)) are Periplasmic-facing. Active-site residues include S90 and K145.

The protein belongs to the peptidase S26 family.

It is found in the cell inner membrane. It carries out the reaction Cleavage of hydrophobic, N-terminal signal or leader sequences from secreted and periplasmic proteins.. The chain is Signal peptidase I (lepB) from Pseudomonas fluorescens.